The following is a 179-amino-acid chain: Large ribosomal subunit protein uL5 (179 aa).

The protein belongs to the universal ribosomal protein uL5 family. As to quaternary structure, part of the 50S ribosomal subunit; part of the 5S rRNA/L5/L18/L25 subcomplex. Contacts the 5S rRNA and the P site tRNA. Forms a bridge to the 30S subunit in the 70S ribosome.

In terms of biological role, this is one of the proteins that bind and probably mediate the attachment of the 5S RNA into the large ribosomal subunit, where it forms part of the central protuberance. In the 70S ribosome it contacts protein S13 of the 30S subunit (bridge B1b), connecting the 2 subunits; this bridge is implicated in subunit movement. Contacts the P site tRNA; the 5S rRNA and some of its associated proteins might help stabilize positioning of ribosome-bound tRNAs. The polypeptide is Large ribosomal subunit protein uL5 (Oceanobacillus iheyensis (strain DSM 14371 / CIP 107618 / JCM 11309 / KCTC 3954 / HTE831)).